Reading from the N-terminus, the 292-residue chain is Ribosomal protein L11 methyltransferase (292 aa).

Residues Thr-144, Gly-165, Asp-187, and Asn-229 each contribute to the S-adenosyl-L-methionine site.

This sequence belongs to the methyltransferase superfamily. PrmA family.

It localises to the cytoplasm. It catalyses the reaction L-lysyl-[protein] + 3 S-adenosyl-L-methionine = N(6),N(6),N(6)-trimethyl-L-lysyl-[protein] + 3 S-adenosyl-L-homocysteine + 3 H(+). Functionally, methylates ribosomal protein L11. In Pseudomonas fluorescens (strain SBW25), this protein is Ribosomal protein L11 methyltransferase.